Here is a 568-residue protein sequence, read N- to C-terminus: MMNKESFGACLLLTLPEDVFAVISRFLSPSDICNLILCGKSLPALVDTEKMWLVQCEEVKVLPLLEIVQWRIGISSYKALCRFLVEVVKPLLGIWVQQNPELGNVVYVMPGFLSVVGCRIIPQKVAPSWIQEDRVKWSPVFEIICGFDGSNGFFLHGRDKEGSCLYPGFVMGIEKSCNVLQLDVVPRQEKSSCNEIERGASREEGEIPFWMLAFSDRKNLLNIVTSHVSLHVVEPLNEMLFPTLKYDEAMLVERRTILLKMHKFGGNWKNMNLEEDDQLCYNPMQVKINEMLENLGDDYFFDEEELIEVTPTENTNVLGESSSSKNTTPSQSEIRVSNRQSFLSSGDTFGLGLTASYSEMSYYKGWPYMHFHHFLLYKLPVKKAVDQEAYAGLWGGTIGCPAGKCPKGKTEKSLYLLMLTYEESEEHSERVLIGTKILEGKRYVRHPNGTAMFVVKIDTPSLDPFPVDANETHFENSYSGEGIAEGYSFRYTGSKPGSLFVITNDLLAFVWKETKVVITLQRLNLTEILKKGLGSCVPPLPPSKNFTYMRRSFINEFTKLSTDSSYSE.

Positions 9-55 (ACLLLTLPEDVFAVISRFLSPSDICNLILCGKSLPALVDTEKMWLVQ) constitute an F-box domain. The interval 315-337 (TNVLGESSSSKNTTPSQSEIRVS) is disordered. The segment covering 321 to 332 (SSSSKNTTPSQS) has biased composition (low complexity).

The protein is Putative F-box protein At5g39480 of Arabidopsis thaliana (Mouse-ear cress).